A 1262-amino-acid chain; its full sequence is ATP-dependent helicase/nuclease subunit A (1262 aa).

Positions 5–476 constitute a UvrD-like helicase ATP-binding domain; that stretch reads FSFTPSQDQA…IVLAENFRSM (472 aa). An ATP-binding site is contributed by 26-33; the sequence is ASAGSGKT. The UvrD-like helicase C-terminal domain occupies 515–808; it reads DTVTSTAELL…SVMTIHGSKG (294 aa).

Belongs to the helicase family. AddA subfamily. Heterodimer of AddA and AddB/RexB. Requires Mg(2+) as cofactor.

The catalysed reaction is Couples ATP hydrolysis with the unwinding of duplex DNA by translocating in the 3'-5' direction.. The enzyme catalyses ATP + H2O = ADP + phosphate + H(+). Its function is as follows. The heterodimer acts as both an ATP-dependent DNA helicase and an ATP-dependent, dual-direction single-stranded exonuclease. Recognizes the chi site generating a DNA molecule suitable for the initiation of homologous recombination. The AddA nuclease domain is required for chi fragment generation; this subunit has the helicase and 3' -&gt; 5' nuclease activities. This chain is ATP-dependent helicase/nuclease subunit A, found in Levilactobacillus brevis (strain ATCC 367 / BCRC 12310 / CIP 105137 / JCM 1170 / LMG 11437 / NCIMB 947 / NCTC 947) (Lactobacillus brevis).